The primary structure comprises 431 residues: MGNNIKVTFNPDKIAAWWPAVGTYYTTTYPQNQSVFQPGIYQTTSLINPKNQQELDSVLINRYKQIDWNTWQGFPVDQKFSLVSRDPPPKPYINQSAQTFEIKPGPIIVPGIRDIPRGLVPPQTPTNRDQGRKPTPPTPPLRDTHPHLTMKNQTFHLQGFVDGLRDLTTTERQHNAYRDPFTTLSPAVPTVSTILSPPSTTGDPALSPEMSPSSLLGLLAGLQVVYFLWTKILTIAQNLDWWCTSLSFPGGIPECTGQNSQFQTCKHLPTSCPPTCNGFRWMYLRRFIIYLLVLLLCLIFLLVLLDWKGLIPVCPLQPTTETTVNCRQCTISAQDMYTPPYCCCLKPTAGNCTCWPIPSSWALGNYLWEWALARLSWLNLLVPLLQWLGGISLIAWFLLIWMIWFWGPALLSILPPFIPIFVLFFLIWVYI.

A lipid anchor (N-myristoyl glycine; by host) is attached at Gly-2. A pre-S1 region spans residues 2 to 148; the sequence is GNNIKVTFNP…PPLRDTHPHL (147 aa). Residues 2–207 form a pre-S region; it reads GNNIKVTFNP…PSTTGDPALS (206 aa). Over 2–214 the chain is Virion surface; in external conformation; that stretch reads GNNIKVTFNP…ALSPEMSPSS (213 aa). Topologically, residues 2–286 are intravirion; in internal conformation; that stretch reads GNNIKVTFNP…NGFRWMYLRR (285 aa). An N-linked (GlcNAc...) asparagine glycan is attached at Asn-3. Positions 115–147 are disordered; sequence IPRGLVPPQTPTNRDQGRKPTPPTPPLRDTHPH. Residues 149-207 are pre-S2; it reads TMKNQTFHLQGFVDGLRDLTTTERQHNAYRDPFTTLSPAVPTVSTILSPPSTTGDPALS. The helical transmembrane segment at 215–235 threads the bilayer; the sequence is LLGLLAGLQVVYFLWTKILTI. The Intravirion; in external conformation portion of the chain corresponds to 236 to 286; it reads AQNLDWWCTSLSFPGGIPECTGQNSQFQTCKHLPTSCPPTCNGFRWMYLRR. The helical transmembrane segment at 287-307 threads the bilayer; sequence FIIYLLVLLLCLIFLLVLLDW. Topologically, residues 308–379 are virion surface; that stretch reads KGLIPVCPLQ…WALARLSWLN (72 aa). N-linked (GlcNAc...) asparagine; by host glycosylation is present at Asn-351. Residues 380 to 400 traverse the membrane as a helical segment; that stretch reads LLVPLLQWLGGISLIAWFLLI. Over 401–406 the chain is Intravirion; the sequence is WMIWFW. The helical transmembrane segment at 407–429 threads the bilayer; the sequence is GPALLSILPPFIPIFVLFFLIWV. At 430–431 the chain is on the virion surface side; it reads YI.

The protein belongs to the orthohepadnavirus major surface antigen family. As to quaternary structure, in its internal form (Li-HBsAg), interacts with the capsid protein and with the isoform S. Interacts with host chaperone CANX. Associates with host chaperone CANX through its pre-S2 N glycan; this association may be essential for isoform M proper secretion. In terms of assembly, interacts with isoform L. Interacts with the antigens of satellite virus HDV (HDVAgs); this interaction is required for encapsidation of HDV genomic RNA. Isoform M is N-terminally acetylated by host at a ratio of 90%, and N-glycosylated by host at the pre-S2 region. Post-translationally, myristoylated.

Its subcellular location is the virion membrane. The large envelope protein exists in two topological conformations, one which is termed 'external' or Le-HBsAg and the other 'internal' or Li-HBsAg. In its external conformation the protein attaches the virus to cell receptors and thereby initiating infection. This interaction determines the species specificity and liver tropism. This attachment induces virion internalization predominantly through caveolin-mediated endocytosis. The large envelope protein also assures fusion between virion membrane and endosomal membrane. In its internal conformation the protein plays a role in virion morphogenesis and mediates the contact with the nucleocapsid like a matrix protein. Its function is as follows. The middle envelope protein plays an important role in the budding of the virion. It is involved in the induction of budding in a nucleocapsid independent way. In this process the majority of envelope proteins bud to form subviral lipoprotein particles of 22 nm of diameter that do not contain a nucleocapsid. The protein is Large envelope protein of Marmota monax (Woodchuck).